A 490-amino-acid chain; its full sequence is UDP-glycosyltransferase 73C7 (490 aa).

Residues Ser291, 351–353 (APQ), 368–376 (HCGWNSTLE), and 390–393 (FAEQ) contribute to the UDP-alpha-D-glucose site.

Belongs to the UDP-glycosyltransferase family.

The protein is UDP-glycosyltransferase 73C7 (UGT73C7) of Arabidopsis thaliana (Mouse-ear cress).